A 401-amino-acid chain; its full sequence is 4-hydroxy-3-methylbut-2-enyl diphosphate reductase (401 aa).

Residue Cys66 coordinates [4Fe-4S] cluster. His96 lines the (2E)-4-hydroxy-3-methylbut-2-enyl diphosphate pocket. His96 contacts dimethylallyl diphosphate. His96 lines the isopentenyl diphosphate pocket. [4Fe-4S] cluster is bound at residue Cys157. A (2E)-4-hydroxy-3-methylbut-2-enyl diphosphate-binding site is contributed by His185. His185 contributes to the dimethylallyl diphosphate binding site. Residue His185 participates in isopentenyl diphosphate binding. Glu187 acts as the Proton donor in catalysis. Thr250 is a (2E)-4-hydroxy-3-methylbut-2-enyl diphosphate binding site. Cys288 contacts [4Fe-4S] cluster. (2E)-4-hydroxy-3-methylbut-2-enyl diphosphate-binding residues include Ser317, Ser318, Asn319, and Ser381. Residues Ser317, Ser318, Asn319, and Ser381 each coordinate dimethylallyl diphosphate. Residues Ser317, Ser318, Asn319, and Ser381 each contribute to the isopentenyl diphosphate site.

It belongs to the IspH family. Requires [4Fe-4S] cluster as cofactor.

The catalysed reaction is isopentenyl diphosphate + 2 oxidized [2Fe-2S]-[ferredoxin] + H2O = (2E)-4-hydroxy-3-methylbut-2-enyl diphosphate + 2 reduced [2Fe-2S]-[ferredoxin] + 2 H(+). It catalyses the reaction dimethylallyl diphosphate + 2 oxidized [2Fe-2S]-[ferredoxin] + H2O = (2E)-4-hydroxy-3-methylbut-2-enyl diphosphate + 2 reduced [2Fe-2S]-[ferredoxin] + 2 H(+). The protein operates within isoprenoid biosynthesis; dimethylallyl diphosphate biosynthesis; dimethylallyl diphosphate from (2E)-4-hydroxy-3-methylbutenyl diphosphate: step 1/1. It functions in the pathway isoprenoid biosynthesis; isopentenyl diphosphate biosynthesis via DXP pathway; isopentenyl diphosphate from 1-deoxy-D-xylulose 5-phosphate: step 6/6. Catalyzes the conversion of 1-hydroxy-2-methyl-2-(E)-butenyl 4-diphosphate (HMBPP) into a mixture of isopentenyl diphosphate (IPP) and dimethylallyl diphosphate (DMAPP). Acts in the terminal step of the DOXP/MEP pathway for isoprenoid precursor biosynthesis. The sequence is that of 4-hydroxy-3-methylbut-2-enyl diphosphate reductase from Prochlorococcus marinus (strain NATL1A).